We begin with the raw amino-acid sequence, 206 residues long: uncharacterized protein (206 aa).

The first 17 residues, 1-17, serve as a signal peptide directing secretion; sequence MKGKILFALFLSAGVIA. Cys18 carries N-palmitoyl cysteine lipidation. Cys18 is lipidated: S-diacylglycerol cysteine. The stretch at 21-58 forms a coiled coil; sequence ASQAAKQQEVKVAKAETKTKKKESKAEKFRKALAAQDK. The Cytochrome c domain occupies 97 to 201; that stretch reads GDWRKGESLA…DIVAYLHDPE (105 aa). The heme c site is built by Cys127, Cys130, and His131.

Its subcellular location is the cell membrane. This is an uncharacterized protein from Aquifex aeolicus (strain VF5).